The chain runs to 512 residues: Methionine--tRNA ligase (512 aa).

A 'HIGH' region motif is present at residues 12 to 22 (YYVNDVPHIGH). The 'KMSKS' region motif lies at 295 to 299 (KISKS). Lys298 contributes to the ATP binding site.

It belongs to the class-I aminoacyl-tRNA synthetase family. MetG type 2B subfamily. As to quaternary structure, monomer.

Its subcellular location is the cytoplasm. It catalyses the reaction tRNA(Met) + L-methionine + ATP = L-methionyl-tRNA(Met) + AMP + diphosphate. In terms of biological role, is required not only for elongation of protein synthesis but also for the initiation of all mRNA translation through initiator tRNA(fMet) aminoacylation. This Rickettsia felis (strain ATCC VR-1525 / URRWXCal2) (Rickettsia azadi) protein is Methionine--tRNA ligase.